Here is a 1043-residue protein sequence, read N- to C-terminus: Integrator complex subunit 3 (1043 aa).

Residue Met-1 is modified to N-acetylmethionine. Phosphoserine is present on residues Ser-502, Ser-537, and Ser-995. The disordered stretch occupies residues 977 to 1043 (YEDSSTKPPK…GSSAVGSDSD (67 aa)). Residues 1008–1022 (AEEESGSSSASEEED) are compositionally biased toward acidic residues.

The protein belongs to the Integrator subunit 3 family. As to quaternary structure, component of the Integrator complex, composed of core subunits INTS1, INTS2, INTS3, INTS4, INTS5, INTS6, INTS7, INTS8, INTS9/RC74, INTS10, INTS11/CPSF3L, INTS12, INTS13, INTS14 and INTS15. The core complex associates with protein phosphatase 2A subunits PPP2CA and PPP2R1A, to form the Integrator-PP2A (INTAC) complex. Component of the SOSS complex, composed of SOSS-B (SOSS-B1/NABP2 or SOSS-B2/NABP1), SOSS-A/INTS3 and SOSS-C/INIP. SOSS complexes containing SOSS-B1/NABP2 are more abundant than complexes containing SOSS-B2/NABP1. Interacts with SOSS-B1/NABP2, SOSS-B2/NABP1 and SOSS-C/INIP; the interaction is direct. Interacts with NBN/NBS1.

The protein resides in the nucleus. Its subcellular location is the cytoplasm. Its function is as follows. Component of the integrator complex, a multiprotein complex that terminates RNA polymerase II (Pol II) transcription in the promoter-proximal region of genes. The integrator complex provides a quality checkpoint during transcription elongation by driving premature transcription termination of transcripts that are unfavorably configured for transcriptional elongation: the complex terminates transcription by (1) catalyzing dephosphorylation of the C-terminal domain (CTD) of Pol II subunit POLR2A/RPB1 and SUPT5H/SPT5, (2) degrading the exiting nascent RNA transcript via endonuclease activity and (3) promoting the release of Pol II from bound DNA. The integrator complex is also involved in terminating the synthesis of non-coding Pol II transcripts, such as enhancer RNAs (eRNAs), small nuclear RNAs (snRNAs), telomerase RNAs and long non-coding RNAs (lncRNAs). Within the integrator complex, INTS3 is involved in the post-termination step: INTS3 binds INTS7 in the open conformation of integrator complex and prevents the rebinding of Pol II to the integrator after termination cycle. Mediates recruitment of cytoplasmic dynein to the nuclear envelope, probably as component of the integrator complex. Functionally, component of the SOSS complex, a multiprotein complex that functions downstream of the MRN complex to promote DNA repair and G2/M checkpoint. The SOSS complex associates with single-stranded DNA at DNA lesions and influences diverse endpoints in the cellular DNA damage response including cell-cycle checkpoint activation, recombinational repair and maintenance of genomic stability. The SOSS complex is required for efficient homologous recombination-dependent repair of double-strand breaks (DSBs) and ATM-dependent signaling pathways. In the SOSS complex, it is required for the assembly of the complex and for stabilization of the complex at DNA damage sites. The sequence is that of Integrator complex subunit 3 from Homo sapiens (Human).